A 120-amino-acid polypeptide reads, in one-letter code: Cytochrome c6 (120 aa).

The signal sequence occupies residues 1–35 (MFKLFNQASRIFFGIALPCLIFLGGIFSLGNTALA). Heme c is bound by residues C49, C52, H53, and M93.

It belongs to the cytochrome c family. PetJ subfamily. As to quaternary structure, monomer. Post-translationally, binds 1 heme c group covalently per subunit.

It localises to the cellular thylakoid lumen. Its function is as follows. Functions as an electron carrier between membrane-bound cytochrome b6-f and photosystem I in oxygenic photosynthesis. The sequence is that of Cytochrome c6 (petJ) from Synechocystis sp. (strain ATCC 27184 / PCC 6803 / Kazusa).